We begin with the raw amino-acid sequence, 291 residues long: m-AAA protease-interacting protein 1, mitochondrial (291 aa).

A mitochondrion-targeting transit peptide spans 1–96 (MALAARLLPQ…SFPACPQRSY (96 aa)).

In terms of assembly, interacts with AFG3L2. Interacts with SPG7. Interacts with SMDT1/EMRE (via the N-terminal transit peptide); interaction is direct and takes place before maturation of SMDT1/EMRE.

It is found in the mitochondrion matrix. In terms of biological role, promotes sorting of SMDT1/EMRE in mitochondria by ensuring its maturation. Interacts with the transit peptide region of SMDT1/EMRE precursor protein in the mitochondrial matrix, leading to protect it against protein degradation by YME1L1, thereby ensuring SMDT1/EMRE maturation by the mitochondrial processing peptidase (PMPCA and PMPCB). In Homo sapiens (Human), this protein is m-AAA protease-interacting protein 1, mitochondrial.